The following is a 125-amino-acid chain: MNLEYVHVVQKFNQVLLELTKKVCTVVGGNKPTYWYHHIRRVCSECPSMPMSMIGPYLNVYKTQIVTKDKNFFMNFDPPAHNEYTFIIQKLKEAARNMPEDELEQYWAKLLFLLKSYIKCKPFIN.

Belongs to the asfivirus H124R family.

It localises to the virion. This is an uncharacterized protein from Ornithodoros (relapsing fever ticks).